We begin with the raw amino-acid sequence, 251 residues long: Ribosomal RNA small subunit methyltransferase J (251 aa).

Residues Arg100–Asp101, Glu116–Arg117, and Asp170 contribute to the S-adenosyl-L-methionine site.

Belongs to the methyltransferase superfamily. RsmJ family.

The protein localises to the cytoplasm. The catalysed reaction is guanosine(1516) in 16S rRNA + S-adenosyl-L-methionine = N(2)-methylguanosine(1516) in 16S rRNA + S-adenosyl-L-homocysteine + H(+). Functionally, specifically methylates the guanosine in position 1516 of 16S rRNA. The protein is Ribosomal RNA small subunit methyltransferase J of Haemophilus ducreyi (strain 35000HP / ATCC 700724).